Reading from the N-terminus, the 2196-residue chain is Non-reducing polyketide synthase CTB1 (2196 aa).

An N-terminal acylcarrier protein transacylase domain (SAT) region spans residues 11-250; it reads AFGDQTYDCS…TRLPITAPYH (240 aa). One can recognise a Ketosynthase family 3 (KS3) domain in the interval 381 to 814; sequence KSPIAILAAS…GGNTCLVLED (434 aa). Catalysis depends on for beta-ketoacyl synthase activity residues C553, H688, and H733. The malonyl-CoA:ACP transacylase (MAT) domain stretch occupies residues 922–1223; the sequence is AFTGQGSAFA…QTFASINKDK (302 aa). A product template (PT) domain region spans residues 1298–1611; sequence SSSIHKVITN…VPKRLMHYIV (314 aa). The segment at 1302–1441 is N-terminal hotdog fold; the sequence is HKVITNTITA…EKTALKSAAL (140 aa). Residues 1302 to 1608 form the PKS/mFAS DH domain; sequence HKVITNTITA…LQGVPKRLMH (307 aa). The active-site Proton acceptor; for dehydratase activity is the H1335. Residues 1460–1608 are C-terminal hotdog fold; that stretch reads TYRFSKGMIY…LQGVPKRLMH (149 aa). D1520 serves as the catalytic Proton donor; for dehydratase activity. The disordered stretch occupies residues 1617–1666; sequence KASGPPTEKKTSSPPVEKKASAPVAPTRPAIQRKNASIPPPATQVTPQNK. Over residues 1623–1636 the composition is skewed to basic and acidic residues; it reads TEKKTSSPPVEKKA. Carrier domains are found at residues 1671–1748 and 1775–1857; these read PSVS…TRLS and DPSP…SGST. S1708 and S1816 each carry O-(pantetheine 4'-phosphoryl)serine. Polar residues predominate over residues 1856–1867; the sequence is STESFDSTTTKP. Positions 1856-1923 are disordered; sequence STESFDSTTT…PPKGRIPPAW (68 aa). Positions 1872–1887 are enriched in low complexity; the sequence is ATPPLTDSSASSPPSS. Residues 1937 to 2187 are thioesterase (TE) domain; that stretch reads ILFLFPDGAG…SGAQMLVEHM (251 aa).

The cofactor is pantetheine 4'-phosphate.

The enzyme catalyses 6 malonyl-CoA + acetyl-CoA + 6 H(+) = nor-toralactone + 6 CO2 + 7 CoA + 2 H2O. It functions in the pathway mycotoxin biosynthesis. Functionally, polyketide synthase; part of the gene cluster that mediates the biosynthesis of cercosporin, a light-activated, non-host-selective toxin. The perylenequinone chromophore of cercosporin absorbs light energy to attain an electronically-activated triplet state and produces active oxygen species such as the hydroxyl radical, superoxide, hydrogen peroxide or singlet oxygen upon reaction with oxygen molecules. These reactive oxygen species cause damage to various cellular components including lipids, proteins and nucleic acids. The first step of cercosporin biosynthesis is performed by the polyketide synthase CTB1 which catalyzes the formation of nor-toralactone. The starter unit acyltransferase (SAT) domain of CTB1 initiates polyketide extension by the selective utilization of acetyl-CoA, which is elongated to the heptaketide in the beta-ketoacyl synthase (KS) domain by successive condensations with six malonyl units introduced by the malonyl acyltransferase (MAT) domain. The product template (PT) domain catalyzes C4-C9 and C2-C11 aldol cyclizations and dehydrations to a trihydroxynaphthalene, which is thought to be delivered to the thioesterase (TE) domain for product release. The bifunctional enzyme CTB3 then methylates nor-toralactone to toralactone before conducting an unusual oxidative aromatic ring opening. The O-methyltransferase CTB2 further methylates the nascent OH-6 of the CBT3 product, blocking further oxidation at this site before the reductase CTB6 reduces the 2-oxopropyl ketone at position C7, giving naphthalene. The FAD-dependent monooxygenase CTB5 in concert with the multicopper oxidase CTB12 are responsible for homodimerization of naphthalene with CTB7 installing the dioxepine moiety, finally producing cercosporin. The fasciclin domain-containing protein CTB11 might act with CTB5 and CTB12 whereas the roles of CTB9 and CTB10 have still to be elucidated. This Cercospora nicotianae (Barn spot disease fungus) protein is Non-reducing polyketide synthase CTB1.